The sequence spans 85 residues: Sodium channel neurotoxin MeuNaTxalpha-2 (85 aa).

The N-terminal stretch at 1–19 is a signal peptide; the sequence is MNYLVMISLALLLMTGVES. The region spanning 21–83 is the LCN-type CS-alpha/beta domain; sequence RDAYIANDRN…VPIRIPGECR (63 aa). 4 cysteine pairs are disulfide-bonded: cysteine 31–cysteine 82, cysteine 35–cysteine 55, cysteine 41–cysteine 65, and cysteine 45–cysteine 67. An Arginine amide modification is found at arginine 83.

This sequence belongs to the long (4 C-C) scorpion toxin superfamily. Sodium channel inhibitor family. Alpha subfamily. Expressed by the venom gland.

Its subcellular location is the secreted. Functionally, alpha toxins bind voltage-independently at site-3 of sodium channels (Nav) and inhibit the inactivation of the activated channels, thereby blocking neuronal transmission. This toxin inhibits inactivation of Nav1.4/SCN4A (EC(50)=2.23 uM) and drosophila DmNav1 (EC(50)=220 nM). The toxin (1 uM) does not significantly shift the midpoint of activation at the two channels, but induces a significant depolarizing shift in the V(1/2) of inactivation of the channels. In addition, the toxin accelerates the recovery from fast inactivation in Nav1.4/SCN4A and DmNav1. It also shows antimicrobial activity. The polypeptide is Sodium channel neurotoxin MeuNaTxalpha-2 (Mesobuthus eupeus (Lesser Asian scorpion)).